The following is a 1363-amino-acid chain: Insulin-like peptide receptor (1363 aa).

A signal peptide spans 1–29; the sequence is MRVVDKMAGLMWAALTLVIGLGLLVPSNG. N-linked (GlcNAc...) asparagine glycans are attached at residues Asn51, Asn97, Asn137, Asn278, Asn483, Asn599, Asn617, Asn665, Asn666, Asn711, Asn732, Asn736, Asn743, Asn816, Asn885, and Asn898. 2 consecutive Fibronectin type-III domains span residues 473 to 586 and 590 to 680; these read SFSR…TDAD and HPQD…CPKS. Fibronectin type-III domains lie at 712 to 804 and 813 to 912; these read ETRA…LART and IPGN…VEEE. Topologically, residues 721-928 are extracellular; that stretch reads ELPVTARPFY…QDPQQQVPVS (208 aa). The interval 739-759 is disordered; it reads LPSTNRTVPPTPTPNPNPQLE. The chain crosses the membrane as a helical span at residues 929–949; it reads LMIGMGVGFSLLLILAVIFGI. The Cytoplasmic portion of the chain corresponds to 950–1363; sequence WYCTKKRFGD…NLRIPKSTLC (414 aa). Residues 994-1283 enclose the Protein kinase domain; sequence ITLIRELGQG…EIVEILSPEL (290 aa). Residues 1000 to 1008 and Lys1028 each bind ATP; that span reads LGQGSFGMV. The segment at 1091–1117 is disordered; that stretch reads PEEDVGLSDSPASNEAKNSPFAENDND. Catalysis depends on Asp1148, which acts as the Proton acceptor. Tyr1174 is subject to Phosphotyrosine; by autocatalysis. The disordered stretch occupies residues 1316-1363; that stretch reads DTETEMYPSGSEFSSTPSPPSETPYSHMNGSHPQNGSMNLRIPKSTLC. Low complexity predominate over residues 1322–1331; it reads YPSGSEFSST. The span at 1343-1353 shows a compositional bias: polar residues; it reads MNGSHPQNGSM.

It belongs to the protein kinase superfamily. Tyr protein kinase family. Insulin receptor subfamily. In terms of assembly, probable tetramer of 2 alpha and 2 beta chains linked by disulfide bonds. The alpha chains contribute to the formation of the ligand-binding domain, while the beta chains carry the kinase domain. Requires Mn(2+) as cofactor.

It is found in the membrane. It catalyses the reaction L-tyrosyl-[protein] + ATP = O-phospho-L-tyrosyl-[protein] + ADP + H(+). In terms of biological role, this receptor binds to the insulin related peptide and has a tyrosine-protein kinase activity. The chain is Insulin-like peptide receptor from Branchiostoma lanceolatum (Common lancelet).